Reading from the N-terminus, the 368-residue chain is Glutamate 5-kinase (368 aa).

Lysine 15 contributes to the ATP binding site. Substrate is bound by residues serine 55, aspartate 143, and asparagine 155. ATP contacts are provided by residues 175–176 and 217–223; these read SD and SGGMVSK. In terms of domain architecture, PUA spans 277–354; sequence EGRLTIDAGA…DAQEAALGYA (78 aa).

It belongs to the glutamate 5-kinase family.

The protein resides in the cytoplasm. It carries out the reaction L-glutamate + ATP = L-glutamyl 5-phosphate + ADP. The protein operates within amino-acid biosynthesis; L-proline biosynthesis; L-glutamate 5-semialdehyde from L-glutamate: step 1/2. Functionally, catalyzes the transfer of a phosphate group to glutamate to form L-glutamate 5-phosphate. The sequence is that of Glutamate 5-kinase from Sphingopyxis alaskensis (strain DSM 13593 / LMG 18877 / RB2256) (Sphingomonas alaskensis).